Consider the following 64-residue polypeptide: Purotoxin-2 (64 aa).

Residues 1 to 44 (AKACTPLLHDCSHDRHSCCRGDMFKYVCDCFYPEGEDKTEVCSC) form a knottin domain region. Cystine bridges form between Cys-4/Cys-19, Cys-11/Cys-28, Cys-18/Cys-44, and Cys-30/Cys-42. A linear cationic cytotoxin domain region spans residues 45–64 (QQPKSHKIAEKIIDKAKTTL). A Leucine amide modification is found at Leu-64.

This sequence belongs to the neurotoxin 19 (CSTX) family. 05 (U4-Lctx) subfamily. In terms of processing, amidation at Leu-64 is not mandatory for activity on P2RX3. In terms of tissue distribution, expressed by the venom gland.

The protein resides in the secreted. In terms of biological role, enhances the high-affinity desensitization of human P2RX3 purinoceptors. At 50 nM, the toxin decreases the IC(50) for ambient ATP from 2.67 nM to 0.77 nM in human P2RX3. The sequence is that of Purotoxin-2 from Alopecosa marikovskyi (Wolf spider).